A 345-amino-acid polypeptide reads, in one-letter code: Phosphoribosylformylglycinamidine cyclo-ligase (345 aa).

The protein belongs to the AIR synthase family.

Its subcellular location is the cytoplasm. It catalyses the reaction 2-formamido-N(1)-(5-O-phospho-beta-D-ribosyl)acetamidine + ATP = 5-amino-1-(5-phospho-beta-D-ribosyl)imidazole + ADP + phosphate + H(+). Its pathway is purine metabolism; IMP biosynthesis via de novo pathway; 5-amino-1-(5-phospho-D-ribosyl)imidazole from N(2)-formyl-N(1)-(5-phospho-D-ribosyl)glycinamide: step 2/2. This chain is Phosphoribosylformylglycinamidine cyclo-ligase, found in Aeromonas salmonicida (strain A449).